Here is a 378-residue protein sequence, read N- to C-terminus: Neutral protease 2 homolog ARB_04336 (378 aa).

Residues 1-19 (MKFFTALAAVGALLAPAVA) form the signal peptide. Residues 20-186 (LPTPASEASH…DYFSKGLDKR (167 aa)) constitute a propeptide that is removed on maturation. 2 cysteine pairs are disulfide-bonded: C192-C262 and C269-C287. Position 311 (H311) interacts with Zn(2+). E312 is a catalytic residue. Zn(2+) contacts are provided by H315 and D326.

This sequence belongs to the peptidase M35 family. Zn(2+) serves as cofactor.

Its subcellular location is the secreted. It catalyses the reaction Preferential cleavage of bonds with hydrophobic residues in P1'. Also 3-Asn-|-Gln-4 and 8-Gly-|-Ser-9 bonds in insulin B chain.. Functionally, secreted metalloproteinase that allows assimilation of proteinaceous substrates. Shows high activities on basic nuclear substrates such as histone and protamine. May be involved in virulence. The sequence is that of Neutral protease 2 homolog ARB_04336 from Arthroderma benhamiae (strain ATCC MYA-4681 / CBS 112371) (Trichophyton mentagrophytes).